The chain runs to 479 residues: Anaerobic nitric oxide reductase flavorubredoxin (479 aa).

Positions 30-210 are zinc metallo-hydrolase; it reads LRGSSYNSYL…PFSRLVTPKI (181 aa). Fe cation-binding residues include His79, Glu81, Asp83, His147, Asp166, and His227. In terms of domain architecture, Flavodoxin-like spans 254-393; the sequence is ITIFYDTMSN…LCRQHGRDIA (140 aa). FMN-binding positions include 260–264 and 342–369; these read TMSNN and AFGS…EMSL. A Rubredoxin-like domain is found at 423–474; the sequence is GPKMQCSVCQWIYDPALGEPLQDVAPGTPWSDVPDNFLCPECSLGKDVFDVL. 4 residues coordinate Fe cation: Cys428, Cys431, Cys461, and Cys464.

This sequence in the N-terminal section; belongs to the zinc metallo-hydrolase group 3 family. In terms of assembly, homotetramer. It depends on Fe cation as a cofactor. FMN serves as cofactor.

It localises to the cytoplasm. It participates in nitrogen metabolism; nitric oxide reduction. Functionally, anaerobic nitric oxide reductase; uses NADH to detoxify nitric oxide (NO), protecting several 4Fe-4S NO-sensitive enzymes. Has at least 2 reductase partners, only one of which (NorW, flavorubredoxin reductase) has been identified. NO probably binds to the di-iron center; electrons enter from the NorW at rubredoxin and are transferred sequentially to the FMN center and the di-iron center. Also able to function as an aerobic oxygen reductase. This chain is Anaerobic nitric oxide reductase flavorubredoxin, found in Salmonella arizonae (strain ATCC BAA-731 / CDC346-86 / RSK2980).